Consider the following 2288-residue polypeptide: Protein Ycf2 (2288 aa).

1629-1636 (GSIGTGRS) serves as a coordination point for ATP.

This sequence belongs to the Ycf2 family.

Its subcellular location is the plastid. It localises to the chloroplast stroma. In terms of biological role, probable ATPase of unknown function. Its presence in a non-photosynthetic plant (Epifagus virginiana) and experiments in tobacco indicate that it has an essential function which is probably not related to photosynthesis. This is Protein Ycf2 from Phaseolus vulgaris (Kidney bean).